The primary structure comprises 507 residues: uncharacterized protein (507 aa).

A compositionally biased stretch (low complexity) spans 1 to 12; the sequence is MEKSISSISKAS. Positions 1-20 are disordered; it reads MEKSISSISKASMNSDEKLD. A run of 12 helical transmembrane segments spans residues 57–74, 100–120, 126–146, 157–177, 189–209, 221–241, 283–303, 326–346, 353–373, 379–399, 416–436, and 445–465; these read FDFR…FNAL, IMIS…SYLY, ARIL…QAAV, WFLG…LTTF, IFYA…YGVF, YLFL…FLVL, VFKH…GVPL, LMTV…AFIS, GIVL…YGSI, IGVS…SSVL, VFTS…ANIF, and VPAL…VASI.

It belongs to the major facilitator superfamily. Allantoate permease family.

The protein localises to the endoplasmic reticulum. The protein resides in the membrane. This is an uncharacterized protein from Schizosaccharomyces pombe (strain 972 / ATCC 24843) (Fission yeast).